The primary structure comprises 551 residues: Medium/long-chain-fatty-acid--CoA/3-oxocholest-4-en-26-oate--CoA ligase (551 aa).

ATP contacts are provided by residues 172-180 (TGGTTGFPK), aspartate 417, arginine 432, and lysine 523.

Belongs to the ATP-dependent AMP-binding enzyme family.

The catalysed reaction is a medium-chain fatty acid + ATP + CoA = a medium-chain fatty acyl-CoA + AMP + diphosphate. It catalyses the reaction a long-chain fatty acid + ATP + CoA = a long-chain fatty acyl-CoA + AMP + diphosphate. The enzyme catalyses (25S)-3-oxocholest-4-en-26-oate + ATP + CoA = (25S)-3-oxocholest-4-en-26-oyl-CoA + AMP + diphosphate. The protein operates within lipid metabolism; fatty acid biosynthesis. It participates in steroid metabolism; cholesterol metabolism. Functionally, plays an essential role in degradation of the side chains of C-24 branched-chain sterols. Not essential for degradation of straight chain sterols such as cholesterol. Catalyzes the activation of medium/long-chain fatty acids as acyl-coenzyme A (acyl-CoA), which are then transferred to the multifunctional polyketide synthase (PKS) type III for further chain extension. May be involved in the degradation of cholesterol via the degradation of the side chains of C-24 branched-chain sterols. The protein is Medium/long-chain-fatty-acid--CoA/3-oxocholest-4-en-26-oate--CoA ligase of Mycolicibacterium smegmatis (strain ATCC 700084 / mc(2)155) (Mycobacterium smegmatis).